A 142-amino-acid polypeptide reads, in one-letter code: Hemoglobin subunit beta-2 (142 aa).

The Globin domain occupies serine 2 to histidine 142. Positions 59 and 88 each coordinate heme b.

The protein belongs to the globin family. As to quaternary structure, heterotetramer of two alpha chains and two beta chains. As to expression, red blood cells.

Functionally, involved in oxygen transport from the lung to the various peripheral tissues. The sequence is that of Hemoglobin subunit beta-2 (HBB2) from Torpedo marmorata (Marbled electric ray).